We begin with the raw amino-acid sequence, 374 residues long: tRNA-specific 2-thiouridylase MnmA (374 aa).

ATP contacts are provided by residues 13–20 (GMSGGVDS) and methionine 39. Residues 99–101 (NPD) form an interaction with target base in tRNA region. The Nucleophile role is filled by cysteine 104. Cysteine 104 and cysteine 201 form a disulfide bridge. An ATP-binding site is contributed by glycine 128. Residues 151–153 (KDQ) form an interaction with tRNA region. Cysteine 201 (cysteine persulfide intermediate) is an active-site residue. Residues 313–314 (RY) form an interaction with tRNA region.

Belongs to the MnmA/TRMU family.

It is found in the cytoplasm. The catalysed reaction is S-sulfanyl-L-cysteinyl-[protein] + uridine(34) in tRNA + AH2 + ATP = 2-thiouridine(34) in tRNA + L-cysteinyl-[protein] + A + AMP + diphosphate + H(+). In terms of biological role, catalyzes the 2-thiolation of uridine at the wobble position (U34) of tRNA, leading to the formation of s(2)U34. In Streptococcus equi subsp. zooepidemicus (strain H70), this protein is tRNA-specific 2-thiouridylase MnmA.